The sequence spans 1940 residues: Protein ORF1940 (1940 aa).

4 TPR repeats span residues 119–153 (IKAC…ALQY), 155–186 (FQSL…LQQI), 480–513 (RLPD…GLHG), and 617–652 (GKSM…SPTS). Disordered regions lie at residues 1160-1239 (PSKV…PGAV) and 1519-1571 (KGPS…TVTS). Residues 1164-1185 (QNTTQPSATQNTTTQPTAQNTS) show a composition bias toward low complexity. Positions 1186–1200 (LPGATQNTTLPTPSK) are enriched in polar residues. Composition is skewed to low complexity over residues 1201–1235 (VQNT…NTSL), 1521–1539 (PSTT…MTPP), and 1561–1571 (TPGSGSQTVTS). Residues 1691–1724 (KDLNKSVGTSVVEEAKYNSTLQTYLAGLGIKDLN) form a TPR 5 repeat. Residues 1862 to 1940 (TTTHHITPPP…AEQAEQVLLI (79 aa)) form a disordered region. Positions 1868–1883 (TPPPPPPPPPPPPPPK) are enriched in pro residues. Residues 1884–1894 (TQTITTTTQIT) show a composition bias toward low complexity. A compositionally biased stretch (pro residues) spans 1895–1912 (PPSPPPTPPPPPPPPKSP).

In Acidianus convivator (ATV), this protein is Protein ORF1940.